The sequence spans 715 residues: Fatty acid oxidation complex subunit alpha (715 aa).

The segment at 1-190 (MIYEGKAITV…KVGAVDAVVA (190 aa)) is enoyl-CoA hydratase/isomerase. Aspartate 297 contributes to the substrate binding site. The segment at 312–715 (HDVKQAAVLG…MAKNGQRFFN (404 aa)) is 3-hydroxyacyl-CoA dehydrogenase. Residues methionine 325, aspartate 344, 401 to 403 (VVE), lysine 408, and serine 430 each bind NAD(+). Residue histidine 451 is the For 3-hydroxyacyl-CoA dehydrogenase activity of the active site. Asparagine 454 is a binding site for NAD(+). Asparagine 501 and tyrosine 660 together coordinate substrate.

The protein in the N-terminal section; belongs to the enoyl-CoA hydratase/isomerase family. In the C-terminal section; belongs to the 3-hydroxyacyl-CoA dehydrogenase family. As to quaternary structure, heterotetramer of two alpha chains (FadB) and two beta chains (FadA).

The enzyme catalyses a (3S)-3-hydroxyacyl-CoA + NAD(+) = a 3-oxoacyl-CoA + NADH + H(+). The catalysed reaction is a (3S)-3-hydroxyacyl-CoA = a (2E)-enoyl-CoA + H2O. It carries out the reaction a 4-saturated-(3S)-3-hydroxyacyl-CoA = a (3E)-enoyl-CoA + H2O. It catalyses the reaction (3S)-3-hydroxybutanoyl-CoA = (3R)-3-hydroxybutanoyl-CoA. The enzyme catalyses a (3Z)-enoyl-CoA = a 4-saturated (2E)-enoyl-CoA. The catalysed reaction is a (3E)-enoyl-CoA = a 4-saturated (2E)-enoyl-CoA. The protein operates within lipid metabolism; fatty acid beta-oxidation. Involved in the aerobic and anaerobic degradation of long-chain fatty acids via beta-oxidation cycle. Catalyzes the formation of 3-oxoacyl-CoA from enoyl-CoA via L-3-hydroxyacyl-CoA. It can also use D-3-hydroxyacyl-CoA and cis-3-enoyl-CoA as substrate. The polypeptide is Fatty acid oxidation complex subunit alpha (Pseudomonas putida (Arthrobacter siderocapsulatus)).